We begin with the raw amino-acid sequence, 539 residues long: Aluminum-activated malate transporter 13 (539 aa).

A run of 6 helical transmembrane segments spans residues 57–77 (VGVALTLVSLLYLMEPFFEGV), 80–100 (NALWAVMTVVVVLEFSAGATL), 107–127 (GLGTLIAGSLAFFIEWVAIHS), 130–150 (ILGGIFIGTSVFTIGSMITYM), 165–185 (LVFLLTFNLITVSSYRVDTVI), and 192–212 (LYTIGMGIGICLFMSLLFFPI).

It belongs to the aromatic acid exporter (TC 2.A.85) family.

It is found in the membrane. Its function is as follows. Malate transporter. This Arabidopsis thaliana (Mouse-ear cress) protein is Aluminum-activated malate transporter 13 (ALMT13).